A 498-amino-acid polypeptide reads, in one-letter code: Probable malate:quinone oxidoreductase (498 aa).

This sequence belongs to the MQO family. FAD serves as cofactor.

It carries out the reaction (S)-malate + a quinone = a quinol + oxaloacetate. It functions in the pathway carbohydrate metabolism; tricarboxylic acid cycle; oxaloacetate from (S)-malate (quinone route): step 1/1. This chain is Probable malate:quinone oxidoreductase, found in Prochlorococcus marinus (strain MIT 9301).